Consider the following 373-residue polypeptide: Histidinol-phosphate aminotransferase (373 aa).

Lys-230 bears the N6-(pyridoxal phosphate)lysine mark.

Belongs to the class-II pyridoxal-phosphate-dependent aminotransferase family. Histidinol-phosphate aminotransferase subfamily. In terms of assembly, homodimer. It depends on pyridoxal 5'-phosphate as a cofactor.

It carries out the reaction L-histidinol phosphate + 2-oxoglutarate = 3-(imidazol-4-yl)-2-oxopropyl phosphate + L-glutamate. The protein operates within amino-acid biosynthesis; L-histidine biosynthesis; L-histidine from 5-phospho-alpha-D-ribose 1-diphosphate: step 7/9. The chain is Histidinol-phosphate aminotransferase from Synechococcus elongatus (strain ATCC 33912 / PCC 7942 / FACHB-805) (Anacystis nidulans R2).